Consider the following 563-residue polypeptide: Beta-catenin-like protein 1 (563 aa).

The residue at position 1 (methionine 1) is an N-acetylmethionine. The tract at residues 1-49 (MDVGELLSYQPNRGTKRPRDDEEEELKMRRRQAGTRERGRYREEEMTVV) is disordered. Residues 16–33 (KRPRDDEEEELKMRRRQA) carry the Nuclear localization signal motif. The segment covering 34 to 45 (GTRERGRYREEE) has biased composition (basic and acidic residues). HEAT repeat units follow at residues 79-129 (ESSV…VVAT) and 134-176 (YHLL…TLHE). The residue at position 91 (lysine 91) is an N6-acetyllysine. The Nuclear export signal (NES) signature appears at 130–140 (MPDLYHLLVEL). ARM repeat units follow at residues 178–228 (EEGA…MAEF), 229–273 (RPEM…LQDN), 274–323 (DENR…CLML), 325–363 (SNRE…AMIG), and 364–417 (PEGT…LLRN). Serine 389 bears the Phosphoserine mark. The stretch at 476–540 (DIEDEFYLRR…HIIKEYAENI (65 aa)) forms a coiled coil. Serine 545 bears the Phosphoserine mark.

Component of the PRP19-CDC5L splicing complex composed of a core complex comprising a homotetramer of PRPF19, CDC5L, PLRG1 and BCAS2, and at least three less stably associated proteins CTNNBL1, CWC15 and HSPA8. Interacts directly with CWC15 and CDC5L in the complex. Interacts with AICDA; the interaction is important for the antibody diversification activity of AICDA. Interacts with PRPF31 (via its NLS). Interacts (via its N-terminal NLS) with KPNA1 and KPNA2.

Its subcellular location is the nucleus. Its function is as follows. Component of the PRP19-CDC5L complex that forms an integral part of the spliceosome and is required for activating pre-mRNA splicing. Participates in AID/AICDA-mediated somatic hypermutation (SHM) and class-switch recombination (CSR), 2 processes resulting in the production of high-affinity, mutated isotype-switched antibodies. The polypeptide is Beta-catenin-like protein 1 (CTNNBL1) (Bos taurus (Bovine)).